Reading from the N-terminus, the 147-residue chain is Myoglobin (147 aa).

A2 carries the N-acetylalanine modification. Residues 2-141 (ADFDAVLKCW…IIADLEANYK (140 aa)) enclose the Globin domain. Residue H60 participates in nitrite binding. H60 provides a ligand contact to O2. Residue H89 participates in heme b binding.

It belongs to the globin family. In terms of assembly, monomeric.

It is found in the cytoplasm. Its subcellular location is the sarcoplasm. The catalysed reaction is Fe(III)-heme b-[protein] + nitric oxide + H2O = Fe(II)-heme b-[protein] + nitrite + 2 H(+). It carries out the reaction H2O2 + AH2 = A + 2 H2O. In terms of biological role, monomeric heme protein which primary function is to store oxygen and facilitate its diffusion within muscle tissues. Reversibly binds oxygen through a pentacoordinated heme iron and enables its timely and efficient release as needed during periods of heightened demand. Depending on the oxidative conditions of tissues and cells, and in addition to its ability to bind oxygen, it also has a nitrite reductase activity whereby it regulates the production of bioactive nitric oxide. Under stress conditions, like hypoxia and anoxia, it also protects cells against reactive oxygen species thanks to its pseudoperoxidase activity. This chain is Myoglobin (mb), found in Thunnus albacares (Yellowfin tuna).